Reading from the N-terminus, the 917-residue chain is Hexokinase HKDC1 (917 aa).

The interval 1 to 20 (MFAVHLMAFYFSKLKEDQIK) is mitochondrial-binding peptide (MBP). 2 Hexokinase domains span residues 16–458 (EDQI…MVTA) and 464–905 (QAQR…LITA). ATP-binding positions include arginine 30 and 84–89 (DLGGSK). Residues 73–207 (DGSENGEFLS…DMDVDILALV (135 aa)) are hexokinase small subdomain 1. Residue 84-91 (DLGGSKFR) coordinates D-glucose 6-phosphate. D-glucose-binding positions include serine 155, 172–173 (TK), and 208–209 (ND). A hexokinase large subdomain 1 region spans residues 208–447 (NDTVGTMMTC…CDVRFLLSES (240 aa)). D-glucose 6-phosphate is bound by residues aspartate 209 and threonine 232. Residues asparagine 235, glutamate 260, and 291 to 294 (QLFE) contribute to the D-glucose site. D-glucose 6-phosphate is bound at residue 413-415 (DGT). 425–426 (KR) is an ATP binding site. D-glucose 6-phosphate is bound by residues serine 449 and 532 to 536 (DLGGT). Residues 521–654 (DGTEKGKFLA…EFDLDIVAVV (134 aa)) form a hexokinase small subdomain 2 region. ATP is bound at residue 532-537 (DLGGTN). Residues 602–603 (SF), 619–620 (TK), and 655–656 (ND) contribute to the D-glucose site. The segment at 655–894 (NDTVGTMMTC…CDVTFMLSED (240 aa)) is hexokinase large subdomain 2. 2 residues coordinate D-glucose 6-phosphate: aspartate 656 and threonine 679. Threonine 679 provides a ligand contact to ATP. Residues 681–682 (SN), glutamate 707, and glutamate 741 each bind D-glucose. Residues 746 to 747 (GM), 783 to 787 (TKFLS), and 862 to 866 (TLYKL) contribute to the ATP site. Residues 860–862 (DGT) and serine 896 each bind D-glucose 6-phosphate.

This sequence belongs to the hexokinase family. Widely expressed. Highly expressed in the brush border, surface epithelium and the myenteric plexus of the small and large intestines; the acinar centrocytes and interlobular ducts of the pancreas; and the alveolar macrophages in the lungs (at protein level). Present at moderate level in the thyroid follicular epithelium (at protein level).

It is found in the cytoplasm. The protein resides in the mitochondrion membrane. It localises to the photoreceptor inner segment. The catalysed reaction is a D-hexose + ATP = a D-hexose 6-phosphate + ADP + H(+). The enzyme catalyses D-glucose + ATP = D-glucose 6-phosphate + ADP + H(+). Its pathway is carbohydrate metabolism; hexose metabolism. It participates in carbohydrate degradation; glycolysis; D-glyceraldehyde 3-phosphate and glycerone phosphate from D-glucose: step 1/4. Catalyzes the phosphorylation of hexose to hexose 6-phosphate, although at very low level compared to other hexokinases. Has low glucose phosphorylating activity compared to other hexokinases. Involved in glucose homeostasis and hepatic lipid accumulation. Required to maintain whole-body glucose homeostasis during pregnancy; however additional evidences are required to confirm this role. This chain is Hexokinase HKDC1, found in Homo sapiens (Human).